Consider the following 750-residue polypeptide: Serine/threonine-protein kinase PknG (750 aa).

Residues 1–66 form a disordered region; the sequence is MAKASETERS…PQDRMATTSR (66 aa). Polar residues predominate over residues 17 to 34; it reads ADAQTATSATVRPLSTQA. The Protein kinase domain occupies 151–396; it reads YEVKGCIAHG…EMSAQLTGVL (246 aa). Residues 157 to 165 and K181 contribute to the ATP site; that span reads IAHGGLGWI. D276 serves as the catalytic Proton acceptor.

It belongs to the protein kinase superfamily. Ser/Thr protein kinase family. Autophosphorylated.

The enzyme catalyses L-seryl-[protein] + ATP = O-phospho-L-seryl-[protein] + ADP + H(+). The catalysed reaction is L-threonyl-[protein] + ATP = O-phospho-L-threonyl-[protein] + ADP + H(+). In Mycobacterium bovis (strain ATCC BAA-935 / AF2122/97), this protein is Serine/threonine-protein kinase PknG (pknG).